Consider the following 395-residue polypeptide: Putative gustatory receptor 58a (395 aa).

Over 1 to 32 (MLLKFMYIYGIGCGLMPAPLKKGQFLLGYKQR) the chain is Cytoplasmic. A helical membrane pass occupies residues 33-53 (WYLIYTACLHGGLLTVLPFTF). The Extracellular portion of the chain corresponds to 54-72 (PHYMYDDSYMSSNPVLKWT). Residues 73-93 (FNLTNITRIMAMFSGVLLMWF) form a helical membrane-spanning segment. The Cytoplasmic portion of the chain corresponds to 94–131 (RRKRILNLGENLILHCLKCKTLDNRSKKYSKLRKRVRN). A helical membrane pass occupies residues 132 to 152 (VLFQMLLVANLSILLGALILF). The Extracellular portion of the chain corresponds to 153–169 (RIHSVQRISKTAMIVAH). Residues 170–190 (ITQFIYVVFMMTGICVILLVL) traverse the membrane as a helical segment. The Cytoplasmic portion of the chain corresponds to 191 to 250 (HWQSERLQIALKDLCSFLNHEERNSLTLSENKANRSLGKLAKLFKLFAENQRLVREVFRT). The chain crosses the membrane as a helical span at residues 251–271 (FDLPIALLLLKMFVTNVNLVY). Residues 272–288 (HGVQFGNDTIETSSYTR) lie on the Extracellular side of the membrane. Asn278 carries N-linked (GlcNAc...) asparagine glycosylation. Residues 289 to 309 (IVGQWVVISHYWSAVLLMNVV) traverse the membrane as a helical segment. Topologically, residues 310-366 (DDVTRRSDLKMGDLLREFSHLELVKRDFHLQLELFSDHLRCHPSTYKVCGLFIFNKQ) are cytoplasmic. A helical transmembrane segment spans residues 367 to 387 (TSLAYFFYVLVQVLVLVQFDL). Residues 388–395 (KNKVEKRN) are Extracellular-facing.

The protein belongs to the insect chemoreceptor superfamily. Gustatory receptor (GR) family. Gr22e subfamily. Expressed in the adult labellar chemosensory neurons.

Its subcellular location is the cell membrane. In terms of biological role, probable gustatory receptor which mediates acceptance or avoidance behavior, depending on its substrates. The sequence is that of Putative gustatory receptor 58a (Gr58a) from Drosophila melanogaster (Fruit fly).